The sequence spans 265 residues: Orotidine 5'-phosphate decarboxylase (265 aa).

Residues Asp37, 59–61, 91–100, Tyr217, and Arg235 each bind substrate; these read KTH and DRKFADIGNT. The Proton donor role is filled by Lys93.

The protein belongs to the OMP decarboxylase family.

The catalysed reaction is orotidine 5'-phosphate + H(+) = UMP + CO2. Its pathway is pyrimidine metabolism; UMP biosynthesis via de novo pathway; UMP from orotate: step 2/2. This is Orotidine 5'-phosphate decarboxylase (URA3) from Candida glabrata (strain ATCC 2001 / BCRC 20586 / JCM 3761 / NBRC 0622 / NRRL Y-65 / CBS 138) (Yeast).